Reading from the N-terminus, the 229-residue chain is (S)-2-haloacid dehalogenase 2 (229 aa).

Catalysis depends on Asp-10, which acts as the Nucleophile. An (S)-2-haloacid contacts are provided by residues 11–12, Arg-41, and 118–119; these read LY and SN. The interval 175–180 is important for catalytic activity; that stretch reads SSNAWD.

The protein belongs to the HAD-like hydrolase superfamily. S-2-haloalkanoic acid dehalogenase family.

The enzyme catalyses an (S)-2-haloacid + H2O = a (2R)-2-hydroxycarboxylate + a halide anion + H(+). It catalyses the reaction (S)-2-chloropropanoate + H2O = (R)-lactate + chloride + H(+). Catalyzes the hydrolytic dehalogenation of small (S)-2-haloalkanoic acids to yield the corresponding (R)-2-hydroxyalkanoic acids. Acts on acids of short chain lengths, C(2) to C(4), with inversion of configuration at C-2. Active with 2-halogenated carboxylic acids and converts only the S-isomer (or L-isomer) of 2-chloropropionic acid with inversion of configuration to produce R-lactate (or D-isomer). This chain is (S)-2-haloacid dehalogenase 2, found in Pseudomonas sp. (strain CBS-3).